Reading from the N-terminus, the 362-residue chain is Dihydroorotate dehydrogenase (quinone) (362 aa).

Residues 60 to 64 (AGFDK) and Thr-84 contribute to the FMN site. A substrate-binding site is contributed by Lys-64. 109-113 (NRMGF) serves as a coordination point for substrate. Asn-137 and Asn-168 together coordinate FMN. Asn-168 provides a ligand contact to substrate. Ser-171 serves as the catalytic Nucleophile. Asn-173 lines the substrate pocket. FMN contacts are provided by Lys-213 and Ser-241. 242 to 243 (NT) is a substrate binding site. Residues Gly-264, Gly-293, and 314-315 (YS) each bind FMN.

This sequence belongs to the dihydroorotate dehydrogenase family. Type 2 subfamily. As to quaternary structure, monomer. It depends on FMN as a cofactor.

The protein resides in the cell membrane. The catalysed reaction is (S)-dihydroorotate + a quinone = orotate + a quinol. It functions in the pathway pyrimidine metabolism; UMP biosynthesis via de novo pathway; orotate from (S)-dihydroorotate (quinone route): step 1/1. Functionally, catalyzes the conversion of dihydroorotate to orotate with quinone as electron acceptor. In Bartonella henselae (strain ATCC 49882 / DSM 28221 / CCUG 30454 / Houston 1) (Rochalimaea henselae), this protein is Dihydroorotate dehydrogenase (quinone).